A 414-amino-acid polypeptide reads, in one-letter code: Putative dipeptidase TRV_05564 (414 aa).

The signal sequence occupies residues 1 to 20 (MAALFVSLLALTSLVPVQGA). Positions 45, 47, and 157 each coordinate Zn(2+). Cys-96 and Cys-186 are joined by a disulfide. Substrate is bound at residue His-184. Zn(2+) is bound by residues His-228 and His-249. Residues Arg-260 and Asp-320 each contribute to the substrate site. N-linked (GlcNAc...) asparagine glycosylation is present at Asn-392.

It belongs to the metallo-dependent hydrolases superfamily. Peptidase M19 family. Requires Zn(2+) as cofactor.

The catalysed reaction is an L-aminoacyl-L-amino acid + H2O = 2 an L-alpha-amino acid. Its function is as follows. Hydrolyzes a wide range of dipeptides. The polypeptide is Putative dipeptidase TRV_05564 (Trichophyton verrucosum (strain HKI 0517)).